Consider the following 688-residue polypeptide: Transcriptional regulatory protein GAT1 (688 aa).

5 disordered regions span residues Asn83–Ile125, Thr259–Ser278, Phe343–Cys438, Ile482–Lys565, and Leu639–Asn678. Residues Thr259–Ser271 show a composition bias toward low complexity. A compositionally biased stretch (basic and acidic residues) spans Phe359 to Phe368. Positions Asn369–Pro379 are enriched in polar residues. The span at Lys382–Ala397 shows a compositional bias: basic residues. Residues Thr402–Gly428 are compositionally biased toward low complexity. The GATA-type zinc finger occupies Cys438 to Cys462. Composition is skewed to low complexity over residues Gly488–Ser510, Thr529–Pro543, Phe552–Lys565, Leu639–Thr654, and Asn662–Asn678.

It localises to the nucleus. Transcriptional regulator of nitrogen utilization required for nitrogen catabolite repression and utilization of isoleucine, tyrosine and tryptophan as nitrogen sources. Controls expression of the MEP2 ammonium permease, the DUR1,2 urea amidolyase, and the transcription factor STP1, which in turn mediates SAP2 expression, a long-known virulence attribute of C.albicans. Influences the filamentation process depending upon the nitrogen sources available. Required for virulence in a mouse systemic infection model. The chain is Transcriptional regulatory protein GAT1 (GAT1) from Candida albicans (strain SC5314 / ATCC MYA-2876) (Yeast).